The primary structure comprises 321 residues: Beta-ketoacyl-[acyl-carrier-protein] synthase III (321 aa).

Active-site residues include C116 and H248. An ACP-binding region spans residues 249 to 253; it reads QANLR. N278 is a catalytic residue.

This sequence belongs to the thiolase-like superfamily. FabH family. In terms of assembly, homodimer.

It is found in the cytoplasm. It carries out the reaction malonyl-[ACP] + acetyl-CoA + H(+) = 3-oxobutanoyl-[ACP] + CO2 + CoA. It functions in the pathway lipid metabolism; fatty acid biosynthesis. Its function is as follows. Catalyzes the condensation reaction of fatty acid synthesis by the addition to an acyl acceptor of two carbons from malonyl-ACP. Catalyzes the first condensation reaction which initiates fatty acid synthesis and may therefore play a role in governing the total rate of fatty acid production. Possesses both acetoacetyl-ACP synthase and acetyl transacylase activities. Its substrate specificity determines the biosynthesis of branched-chain and/or straight-chain of fatty acids. This chain is Beta-ketoacyl-[acyl-carrier-protein] synthase III, found in Yersinia enterocolitica serotype O:8 / biotype 1B (strain NCTC 13174 / 8081).